We begin with the raw amino-acid sequence, 243 residues long: tRNA (guanine-N(1)-)-methyltransferase (243 aa).

S-adenosyl-L-methionine-binding positions include Gly113 and 133-138 (IGDFVL).

Belongs to the RNA methyltransferase TrmD family. In terms of assembly, homodimer.

It localises to the cytoplasm. The enzyme catalyses guanosine(37) in tRNA + S-adenosyl-L-methionine = N(1)-methylguanosine(37) in tRNA + S-adenosyl-L-homocysteine + H(+). Its function is as follows. Specifically methylates guanosine-37 in various tRNAs. In Bacillus licheniformis (strain ATCC 14580 / DSM 13 / JCM 2505 / CCUG 7422 / NBRC 12200 / NCIMB 9375 / NCTC 10341 / NRRL NRS-1264 / Gibson 46), this protein is tRNA (guanine-N(1)-)-methyltransferase.